A 245-amino-acid chain; its full sequence is tRNA (guanine-N(1)-)-methyltransferase (245 aa).

Residues Gly114 and 133-138 (LGDFVI) each bind S-adenosyl-L-methionine.

This sequence belongs to the RNA methyltransferase TrmD family. As to quaternary structure, homodimer.

It localises to the cytoplasm. The catalysed reaction is guanosine(37) in tRNA + S-adenosyl-L-methionine = N(1)-methylguanosine(37) in tRNA + S-adenosyl-L-homocysteine + H(+). Functionally, specifically methylates guanosine-37 in various tRNAs. The sequence is that of tRNA (guanine-N(1)-)-methyltransferase from Pediococcus pentosaceus (strain ATCC 25745 / CCUG 21536 / LMG 10740 / 183-1w).